The primary structure comprises 201 residues: Sterile alpha motif domain-containing protein 12 (201 aa).

The SAM domain maps to 77 to 143 (WTQQDVCKWL…LQQVLQLKVR (67 aa)).

The polypeptide is Sterile alpha motif domain-containing protein 12 (SAMD12) (Pongo abelii (Sumatran orangutan)).